Here is a 446-residue protein sequence, read N- to C-terminus: N-succinylarginine dihydrolase (446 aa).

Substrate contacts are provided by residues 19–28 (AGLSFGNVAS), asparagine 110, and 137–138 (HR). Residue glutamate 174 is part of the active site. Arginine 213 lines the substrate pocket. Residue histidine 249 is part of the active site. Aspartate 251 and asparagine 364 together coordinate substrate. Catalysis depends on cysteine 370, which acts as the Nucleophile.

The protein belongs to the succinylarginine dihydrolase family. As to quaternary structure, homodimer.

The catalysed reaction is N(2)-succinyl-L-arginine + 2 H2O + 2 H(+) = N(2)-succinyl-L-ornithine + 2 NH4(+) + CO2. Its pathway is amino-acid degradation; L-arginine degradation via AST pathway; L-glutamate and succinate from L-arginine: step 2/5. Its function is as follows. Catalyzes the hydrolysis of N(2)-succinylarginine into N(2)-succinylornithine, ammonia and CO(2). This chain is N-succinylarginine dihydrolase, found in Burkholderia ambifaria (strain MC40-6).